Here is a 499-residue protein sequence, read N- to C-terminus: Cytochrome P450 77A1 (499 aa).

Residue Cys-443 participates in heme binding.

Belongs to the cytochrome P450 family. The cofactor is heme.

The polypeptide is Cytochrome P450 77A1 (CYP77A1) (Solanum melongena (Eggplant)).